The primary structure comprises 228 residues: Triosephosphate isomerase (228 aa).

A substrate-binding site is contributed by 9–11 (NFK). Residue His-93 is the Electrophile of the active site. The Proton acceptor role is filled by Glu-141. Substrate-binding positions include Ile-146, Gly-181, and 202-203 (AS).

The protein belongs to the triosephosphate isomerase family. As to quaternary structure, homotetramer; dimer of dimers.

It is found in the cytoplasm. It catalyses the reaction D-glyceraldehyde 3-phosphate = dihydroxyacetone phosphate. The protein operates within carbohydrate biosynthesis; gluconeogenesis. Its pathway is carbohydrate degradation; glycolysis; D-glyceraldehyde 3-phosphate from glycerone phosphate: step 1/1. Its function is as follows. Involved in the gluconeogenesis. Catalyzes stereospecifically the conversion of dihydroxyacetone phosphate (DHAP) to D-glyceraldehyde-3-phosphate (G3P). The chain is Triosephosphate isomerase from Pyrobaculum calidifontis (strain DSM 21063 / JCM 11548 / VA1).